The chain runs to 234 residues: Triosephosphate isomerase (234 aa).

Residue 8-10 coordinates substrate; the sequence is NFK. The active-site Electrophile is the histidine 90. Glutamate 159 serves as the catalytic Proton acceptor. 2 residues coordinate substrate: glycine 165 and serine 197.

This sequence belongs to the triosephosphate isomerase family. Homodimer.

Its subcellular location is the cytoplasm. It carries out the reaction D-glyceraldehyde 3-phosphate = dihydroxyacetone phosphate. The protein operates within carbohydrate biosynthesis; gluconeogenesis. It participates in carbohydrate degradation; glycolysis; D-glyceraldehyde 3-phosphate from glycerone phosphate: step 1/1. Its function is as follows. Involved in the gluconeogenesis. Catalyzes stereospecifically the conversion of dihydroxyacetone phosphate (DHAP) to D-glyceraldehyde-3-phosphate (G3P). The polypeptide is Triosephosphate isomerase (Helicobacter pylori (strain P12)).